Consider the following 188-residue polypeptide: Proline-rich protein 3 (188 aa).

Positions 1–157 are disordered; it reads MPKRKKQNHH…DPQVMEDKSD (157 aa). Composition is skewed to pro residues over residues 35-46 and 69-82; these read IGPPSLLGPPPM and LIPP…PPWG. The segment covering 83-96 has biased composition (low complexity); that stretch reads RGPIRRGLGPRSSP. A compositionally biased stretch (basic and acidic residues) spans 145–157; it reads PKDDPQVMEDKSD. The segment at 155–183 adopts a C3H1-type zinc-finger fold; the sequence is KSDRPVCRHFAKKGHCRYEDLCAFYHPGV.

This Homo sapiens (Human) protein is Proline-rich protein 3 (PRR3).